The following is a 251-amino-acid chain: Tryptophan synthase alpha chain (251 aa).

Active-site proton acceptor residues include E36 and D47.

This sequence belongs to the TrpA family. Tetramer of two alpha and two beta chains.

It catalyses the reaction (1S,2R)-1-C-(indol-3-yl)glycerol 3-phosphate + L-serine = D-glyceraldehyde 3-phosphate + L-tryptophan + H2O. The protein operates within amino-acid biosynthesis; L-tryptophan biosynthesis; L-tryptophan from chorismate: step 5/5. In terms of biological role, the alpha subunit is responsible for the aldol cleavage of indoleglycerol phosphate to indole and glyceraldehyde 3-phosphate. The sequence is that of Tryptophan synthase alpha chain from Thermococcus kodakarensis (strain ATCC BAA-918 / JCM 12380 / KOD1) (Pyrococcus kodakaraensis (strain KOD1)).